A 1912-amino-acid chain; its full sequence is Methylcytosine dioxygenase TET2 (1912 aa).

Residues 1-11 (MEQDRTTHAEG) are compositionally biased toward basic and acidic residues. Residues 1–86 (MEQDRTTHAE…PHEDRGYSRC (86 aa)) are disordered. Phosphoserine occurs at positions 15 and 23. Over residues 53 to 74 (TKWQSSQSCYGISHMKGSQSSH) the composition is skewed to polar residues. A phosphoserine mark is found at Ser76 and Ser97. Disordered regions lie at residues 112–166 (LDQK…FPTR), 340–359 (DRNL…QKET), 367–388 (SSKF…QSLL), 429–470 (IDHQ…PEKS), 673–723 (PQTQ…DKQR), 832–862 (EQAQ…AEAA), 907–966 (QEQQ…NGQP), and 1009–1052 (ESEN…EGCN). 5 stretches are compositionally biased toward polar residues: residues 135-158 (SRQP…QESS), 340-353 (DRNL…SEQY), 367-387 (SSKF…SQSL), 434-447 (KTSS…SVHT), and 673-689 (PQTQ…SNFP). The segment covering 690 to 701 (QICQQQQQQQLQ) has biased composition (low complexity). Polar residues-rich tracts occupy residues 707–719 (QMPQ…QGSN) and 832–844 (EQAQ…SSLQ). The span at 907–921 (QEQQQTQQSQPGHNQ) shows a compositional bias: low complexity. Composition is skewed to polar residues over residues 944-966 (PQEN…NGQP) and 1036-1046 (SDTPGEQSQNG). Residue Ser1036 is modified to Phosphoserine. Zn(2+)-binding residues include Cys1048, Cys1106, His1132, and Cys1134. Arg1174 contacts 2-oxoglutarate. Residues Cys1184, Cys1186, Cys1202, and Cys1211 each coordinate Zn(2+). The tract at residues 1203–1216 (SWSMYYNGCKFARS) is interaction with DNA. A Glycyl lysine isopeptide (Lys-Gly) (interchain with G-Cter in ubiquitin) cross-link involves residue Lys1212. Position 1271 (Cys1271) interacts with Zn(2+). Cys1287 contributes to the 2-oxoglutarate binding site. His1293 is a binding site for Zn(2+). His1295 and Asp1297 together coordinate Fe cation. Residue Asn1300 participates in substrate binding. His1329 provides a ligand contact to 2-oxoglutarate. Disordered regions lie at residues 1379–1414 (KKKA…SSSH) and 1444–1514 (LQRH…HTSD). Positions 1387-1396 (AKTKKAARKR) are enriched in basic residues. Positions 1456-1473 (QPQPPQPQPQTTPQPQPQ) are enriched in pro residues. Positions 1480-1512 (GNSQSVGSHCSGSTSVYTRQPTPHSPYPSSAHT) are enriched in polar residues. His1795 lines the Fe cation pocket. 1810–1812 (RIS) lines the 2-oxoglutarate pocket. Residue 1816–1818 (YRH) coordinates substrate. His1826 lines the Zn(2+) pocket. The span at 1842–1866 (EEECGKNGSDHVSQKNHGKQEKREP) shows a compositional bias: basic and acidic residues. A disordered region spans residues 1842 to 1871 (EEECGKNGSDHVSQKNHGKQEKREPTGPQE).

This sequence belongs to the TET family. As to quaternary structure, interacts with HCFC1. Interacts with OGT. Interacts with PROSER1; this interaction mediates TET2 O-GlcNAcylation and stability by promoting the interaction between OGT and TET2. Directly interacts (via C-terminus) with the DCAF1 component of the CRL4(VprBP) E3 ubiquitin-protein ligase complex. Fe(2+) is required as a cofactor. The cofactor is Zn(2+). In terms of processing, may be glycosylated. It is unclear whether interaction with OGT leads to GlcNAcylation. According to a report, it is GlcNAcylated by OGT. In contrast, another group reports no GlcNAcylation by OGT in human ortholog. Post-translationally, monoubiquitinated at Lys-1212 by the DCX (DDB1-CUL4-X-box) E3 ubiquitin-protein ligase complex called CRL4(VprBP) or CUL4A-RBX1-DDB1-DCAF1/VPRBP complex; this modification promotes binding to DNA. Acetylated. In terms of tissue distribution, expressed in the brain, kidney, heart, lung, muscle and stomach. Expressed in germinal vesicle (GV) stage and MII-stage oocytes and in early embryos. Present in embryonic stem cells (ES cells).

The protein resides in the nucleus. The protein localises to the chromosome. The enzyme catalyses a 5-methyl-2'-deoxycytidine in DNA + 2-oxoglutarate + O2 = a 5-hydroxymethyl-2'-deoxycytidine in DNA + succinate + CO2. It carries out the reaction a 5-hydroxymethyl-2'-deoxycytidine in DNA + 2-oxoglutarate + O2 = a 5-formyl-2'-deoxycytidine in DNA + succinate + CO2 + H2O. The catalysed reaction is a 5-formyl-2'-deoxycytidine in DNA + 2-oxoglutarate + O2 = a 5-carboxyl-2'-deoxycytidine in DNA + succinate + CO2 + H(+). In terms of biological role, dioxygenase that catalyzes the conversion of the modified genomic base 5-methylcytosine (5mC) into 5-hydroxymethylcytosine (5hmC) and plays a key role in active DNA demethylation. Has a preference for 5-hydroxymethylcytosine in CpG motifs. Also mediates subsequent conversion of 5hmC into 5-formylcytosine (5fC), and conversion of 5fC to 5-carboxylcytosine (5caC). Conversion of 5mC into 5hmC, 5fC and 5caC probably constitutes the first step in cytosine demethylation. Methylation at the C5 position of cytosine bases is an epigenetic modification of the mammalian genome which plays an important role in transcriptional regulation. In addition to its role in DNA demethylation, also involved in the recruitment of the O-GlcNAc transferase OGT to CpG-rich transcription start sites of active genes, thereby promoting histone H2B GlcNAcylation by OGT. The protein is Methylcytosine dioxygenase TET2 (Tet2) of Mus musculus (Mouse).